The sequence spans 338 residues: Solute carrier family 35 member B1 homolog (338 aa).

A run of 9 helical transmembrane segments spans residues Phe9–Lys29, Leu53–Ile73, Gly84–Met104, Thr111–Gly131, Tyr135–Tyr155, Thr168–Val188, Leu213–Ile233, Leu244–Gly264, and Val284–Ala304. The short motif at Lys334 to Ser338 is the Di-lysine motif element.

This sequence belongs to the nucleotide-sugar transporter family. SLC35B subfamily.

The protein resides in the endoplasmic reticulum membrane. Its function is as follows. Probable sugar transporter. This is Solute carrier family 35 member B1 homolog (meigo) from Drosophila melanogaster (Fruit fly).